A 480-amino-acid chain; its full sequence is Glycogen synthase (480 aa).

This sequence belongs to the glycosyltransferase 1 family. Bacterial/plant glycogen synthase subfamily.

It carries out the reaction [(1-&gt;4)-alpha-D-glucosyl](n) + ADP-alpha-D-glucose = [(1-&gt;4)-alpha-D-glucosyl](n+1) + ADP + H(+). It participates in glycan biosynthesis; glycogen biosynthesis. Functionally, synthesizes alpha-1,4-glucan chains using ADP-glucose. This Rhizobium etli (strain ATCC 51251 / DSM 11541 / JCM 21823 / NBRC 15573 / CFN 42) protein is Glycogen synthase.